Reading from the N-terminus, the 612-residue chain is Anaerobic magnesium-protoporphyrin IX monomethyl ester cyclase (612 aa).

The B12-binding domain occupies 9–143 (NYHSGGAEIA…KAYEADNFAE (135 aa)). The region spanning 190–417 (PLGVRVAIPN…MKPKALTRGE (228 aa)) is the Radical SAM core domain. [4Fe-4S] cluster contacts are provided by cysteine 204, cysteine 208, and cysteine 211.

Belongs to the BchE family. Requires [4Fe-4S] cluster as cofactor. Adenosylcob(III)alamin is required as a cofactor.

It catalyses the reaction Mg-protoporphyrin IX 13-monomethyl ester + 3 S-adenosyl-L-methionine + H2O = 3,8-divinyl protochlorophyllide a + 3 5'-deoxyadenosine + 3 L-methionine + 4 H(+). The protein operates within porphyrin-containing compound metabolism; bacteriochlorophyll biosynthesis (light-independent). Its function is as follows. Involved in the tetrapyrrole biosynthetic pathways leading to chlorophyll and bacteriochlorophyll (BChl). Catalyzes the anaerobic formation of the isocyclic ring (E-ring) in Mg-protoporphyrin monomethyl ester (MPE) to yield protochlorophyllide a (PChlide a) via a six-electron oxidation and the formation of an oxo group at position C13 using oxygen from a water molecule. This Cereibacter sphaeroides (strain ATCC 17023 / DSM 158 / JCM 6121 / CCUG 31486 / LMG 2827 / NBRC 12203 / NCIMB 8253 / ATH 2.4.1.) (Rhodobacter sphaeroides) protein is Anaerobic magnesium-protoporphyrin IX monomethyl ester cyclase.